Consider the following 194-residue polypeptide: Ras-like protein RAS1 (194 aa).

G16 to S23 contributes to the GTP binding site. The Effector region signature appears at Y38 to Y46. Residues D63 to Q67 and N122 to D125 each bind GTP. C191 carries the post-translational modification Cysteine methyl ester. The S-geranylgeranyl cysteine moiety is linked to residue C191. The propeptide at T192 to L194 is removed in mature form.

The protein belongs to the small GTPase superfamily. Ras family.

The protein resides in the cell membrane. The enzyme catalyses GTP + H2O = GDP + phosphate + H(+). With respect to regulation, alternates between an inactive form bound to GDP and an active form bound to GTP. Activated by a guanine nucleotide-exchange factor (GEF) and inactivated by a GTPase-activating protein (GAP). Its function is as follows. Ras proteins bind GDP/GTP and possess intrinsic GTPase activity. The protein is Ras-like protein RAS1 (RAS1) of Hydra vulgaris (Hydra).